We begin with the raw amino-acid sequence, 296 residues long: Glycine and tyrosine-rich protein (296 aa).

The first 18 residues, 1–18 (MKVLVTALIISFSTAVLT), serve as a signal peptide directing secretion. Residues 157-280 (MESRLRPQAT…NQPEETPAPN (124 aa)) are disordered. Residues 172–264 (TGGQPSTGGK…STGGQPSTGG (93 aa)) are compositionally biased toward low complexity.

Component of the acid-insoluble and acid-soluble organic matrix of calcified layers of the shell (at protein level).

It is found in the secreted. This Lottia gigantea (Giant owl limpet) protein is Glycine and tyrosine-rich protein.